The chain runs to 178 residues: Large ribosomal subunit protein uL6 (178 aa).

The protein belongs to the universal ribosomal protein uL6 family. In terms of assembly, part of the 50S ribosomal subunit.

This protein binds to the 23S rRNA, and is important in its secondary structure. It is located near the subunit interface in the base of the L7/L12 stalk, and near the tRNA binding site of the peptidyltransferase center. This is Large ribosomal subunit protein uL6 from Streptococcus sanguinis (strain SK36).